We begin with the raw amino-acid sequence, 89 residues long: UPF0250 protein Bphyt_0500 (89 aa).

The protein belongs to the UPF0250 family.

The chain is UPF0250 protein Bphyt_0500 from Paraburkholderia phytofirmans (strain DSM 17436 / LMG 22146 / PsJN) (Burkholderia phytofirmans).